A 168-amino-acid chain; its full sequence is PNTKSIDGENTSKDGFFTYVNGFIKEKLSLGGSAAIKITEFSWNKDLYELIQRFEYWTVFCTSVNTSSSEGFLIGVNYLGPYCDRAIVDGNIMHANYIFWRNSTIMALSHNSVLDTPKFKCRCNNALIVNLKEKELNEMVIGLLKKGKLLIRNNGKLLNFGNHLVNVP.

The Nidovirus-type SAM-dependent 2'-O-MTase domain maps to Pro1–Val165.

In terms of biological role, the replicase polyprotein of coronaviruses is a multifunctional protein: it contains the activities necessary for the transcription of negative stranded RNA, leader RNA, subgenomic mRNAs and progeny virion RNA as well as proteinases responsible for the cleavage of the polyprotein into functional products. This Canine coronavirus (strain Insavc-1) (CCoV) protein is Replicase polyprotein 1ab (rep).